Reading from the N-terminus, the 117-residue chain is Large ribosomal subunit protein bL19 (117 aa).

This sequence belongs to the bacterial ribosomal protein bL19 family.

This protein is located at the 30S-50S ribosomal subunit interface and may play a role in the structure and function of the aminoacyl-tRNA binding site. The chain is Large ribosomal subunit protein bL19 from Shewanella sediminis (strain HAW-EB3).